Consider the following 161-residue polypeptide: MTKLNELAPREGSTKGRMRVGRGPGSGKGKTAGRGVKGQKARSGVAINGFEGGQMPLHMRMPKRGFNNPFRLEFAEVNLWRLEQAVEAGKIKKGAELDAAALIAAGVIRRELDGVKLLAKGEIKTALKLTVYSATEAAIKAVEAAGGSVTVTKKAKAQAEA.

A disordered region spans residues 1 to 39 (MTKLNELAPREGSTKGRMRVGRGPGSGKGKTAGRGVKGQ). A compositionally biased stretch (gly residues) spans 22-36 (RGPGSGKGKTAGRGV).

This sequence belongs to the universal ribosomal protein uL15 family. As to quaternary structure, part of the 50S ribosomal subunit.

Binds to the 23S rRNA. This chain is Large ribosomal subunit protein uL15, found in Caulobacter vibrioides (strain ATCC 19089 / CIP 103742 / CB 15) (Caulobacter crescentus).